Reading from the N-terminus, the 955-residue chain is 2-oxoglutarate dehydrogenase E1 component (955 aa).

The protein belongs to the alpha-ketoglutarate dehydrogenase family. As to quaternary structure, homodimer. Part of the 2-oxoglutarate dehydrogenase (OGDH) complex composed of E1 (2-oxoglutarate dehydrogenase), E2 (dihydrolipoamide succinyltransferase) and E3 (dihydrolipoamide dehydrogenase); the complex contains multiple copies of the three enzymatic components (E1, E2 and E3). Thiamine diphosphate serves as cofactor.

The catalysed reaction is N(6)-[(R)-lipoyl]-L-lysyl-[protein] + 2-oxoglutarate + H(+) = N(6)-[(R)-S(8)-succinyldihydrolipoyl]-L-lysyl-[protein] + CO2. Its function is as follows. E1 component of the 2-oxoglutarate dehydrogenase (OGDH) complex which catalyzes the decarboxylation of 2-oxoglutarate, the first step in the conversion of 2-oxoglutarate to succinyl-CoA and CO(2). The chain is 2-oxoglutarate dehydrogenase E1 component from Bacillus cereus (strain AH820).